Reading from the N-terminus, the 186-residue chain is Chromosomal replication initiator protein DnaA (186 aa).

Residue Glu1 is a region of interest, domain I, interacts with DnaA modulators. A region of interest (domain II) is located at residue Glu1. Positions 1–99 (EFFKTFNALI…GALNKVTHTS (99 aa)) are domain III, AAA+ region. The segment at 100-186 (LIGRSMTVES…GRNFGGRDHT (87 aa)) is domain IV, binds dsDNA.

This sequence belongs to the DnaA family. As to quaternary structure, oligomerizes as a right-handed, spiral filament on DNA at oriC.

It is found in the cytoplasm. In terms of biological role, plays an essential role in the initiation and regulation of chromosomal replication. ATP-DnaA binds to the origin of replication (oriC) to initiate formation of the DNA replication initiation complex once per cell cycle. Binds the DnaA box (a 9 base pair repeat at the origin) and separates the double-stranded (ds)DNA. Forms a right-handed helical filament on oriC DNA; dsDNA binds to the exterior of the filament while single-stranded (ss)DNA is stabiized in the filament's interior. The ATP-DnaA-oriC complex binds and stabilizes one strand of the AT-rich DNA unwinding element (DUE), permitting loading of DNA polymerase. After initiation quickly degrades to an ADP-DnaA complex that is not apt for DNA replication. Binds acidic phospholipids. This chain is Chromosomal replication initiator protein DnaA, found in Wolbachia sp.